Here is a 148-residue protein sequence, read N- to C-terminus: uncharacterized protein (148 aa).

Residues 37–94 (NNNNYNNNNKNNNNNNNNNNNNNNNNNNNNNNNYINSCNSNNNNNNNNNNTKNNNINS) show a composition bias toward low complexity. The interval 37-99 (NNNNYNNNNK…NNINSRTDKN (63 aa)) is disordered.

This is an uncharacterized protein from Dictyostelium discoideum (Social amoeba).